A 121-amino-acid chain; its full sequence is MARIAGVNIPNHQHTEIGLTAIYGVGRTRSRDICVAAGVAFSKKVKDLNDADLEKLREEVGKFIVEGDLRRETTMNIKRLMDLGCYRGVRHRKGLPLRGQRTRTNARTRKGPRRAAQSLKK.

The interval 94 to 121 is disordered; that stretch reads GLPLRGQRTRTNARTRKGPRRAAQSLKK.

Belongs to the universal ribosomal protein uS13 family. Part of the 30S ribosomal subunit. Forms a loose heterodimer with protein S19. Forms two bridges to the 50S subunit in the 70S ribosome.

Located at the top of the head of the 30S subunit, it contacts several helices of the 16S rRNA. In the 70S ribosome it contacts the 23S rRNA (bridge B1a) and protein L5 of the 50S subunit (bridge B1b), connecting the 2 subunits; these bridges are implicated in subunit movement. Contacts the tRNAs in the A and P-sites. The sequence is that of Small ribosomal subunit protein uS13 from Paraburkholderia phytofirmans (strain DSM 17436 / LMG 22146 / PsJN) (Burkholderia phytofirmans).